The primary structure comprises 298 residues: uncharacterized protein (298 aa).

Residues threonine 43 and tyrosine 105 each act as charge relay system in the active site. The active-site Proton donor is tyrosine 131. Catalysis depends on lysine 159, which acts as the Schiff-base intermediate with substrate.

The protein belongs to the DapA family. Homotetramer.

Its subcellular location is the cytoplasm. This is an uncharacterized protein from Pyrococcus furiosus (strain ATCC 43587 / DSM 3638 / JCM 8422 / Vc1).